We begin with the raw amino-acid sequence, 558 residues long: NAD-dependent malic enzyme 2 (558 aa).

Y101 acts as the Proton donor in catalysis. R154 lines the NAD(+) pocket. Residue K172 is the Proton acceptor of the active site. The a divalent metal cation site is built by E243, D244, and D267. Residues D267 and N411 each contribute to the NAD(+) site.

It belongs to the malic enzymes family. In terms of assembly, homotetramer. The cofactor is Mg(2+). Mn(2+) serves as cofactor.

It carries out the reaction (S)-malate + NAD(+) = pyruvate + CO2 + NADH. It catalyses the reaction oxaloacetate + H(+) = pyruvate + CO2. The sequence is that of NAD-dependent malic enzyme 2 from Photobacterium profundum (strain SS9).